A 188-amino-acid chain; its full sequence is Inosine triphosphate pyrophosphatase (188 aa).

Residue 12–17 (TGNANK) coordinates ITP. Glutamate 40 is a Mg(2+) binding site. ITP-binding positions include lysine 52, 68 to 69 (DT), lysine 85, 144 to 147 (FGWD), lysine 165, and 170 to 171 (HR).

It belongs to the HAM1 NTPase family. In terms of assembly, homodimer. The cofactor is Mg(2+). Mn(2+) is required as a cofactor.

It is found in the cytoplasm. The protein resides in the nucleus. It catalyses the reaction ITP + H2O = IMP + diphosphate + H(+). It carries out the reaction dITP + H2O = dIMP + diphosphate + H(+). The catalysed reaction is XTP + H2O = XMP + diphosphate + H(+). Its function is as follows. Pyrophosphatase that hydrolyzes non-canonical purine nucleotides such as inosine triphosphate (ITP), deoxyinosine triphosphate (dITP) or xanthosine 5'-triphosphate (XTP) to their respective monophosphate derivatives. The enzyme does not distinguish between the deoxy- and ribose forms. Probably excludes non-canonical purines from RNA and DNA precursor pools, thus preventing their incorporation into RNA and DNA and avoiding chromosomal lesions. This Podospora anserina (strain S / ATCC MYA-4624 / DSM 980 / FGSC 10383) (Pleurage anserina) protein is Inosine triphosphate pyrophosphatase.